Consider the following 88-residue polypeptide: Large ribosomal subunit protein bL31B (88 aa).

This sequence belongs to the bacterial ribosomal protein bL31 family. Type B subfamily. Part of the 50S ribosomal subunit.

The polypeptide is Large ribosomal subunit protein bL31B (Paraburkholderia phytofirmans (strain DSM 17436 / LMG 22146 / PsJN) (Burkholderia phytofirmans)).